Reading from the N-terminus, the 393-residue chain is Formate-dependent phosphoribosylglycinamide formyltransferase (393 aa).

N(1)-(5-phospho-beta-D-ribosyl)glycinamide-binding positions include 22–23 (EL) and Glu-82. Residues Arg-114, Lys-155, 160–165 (SSGKGQ), 195–198 (EGFI), and Glu-203 each bind ATP. An ATP-grasp domain is found at 119-308 (RLAAEELKLP…QFALHARAIL (190 aa)). Glu-267 and Glu-279 together coordinate Mg(2+). N(1)-(5-phospho-beta-D-ribosyl)glycinamide-binding positions include Asp-286, Lys-356, and 363-364 (RR).

This sequence belongs to the PurK/PurT family. In terms of assembly, homodimer.

It carries out the reaction N(1)-(5-phospho-beta-D-ribosyl)glycinamide + formate + ATP = N(2)-formyl-N(1)-(5-phospho-beta-D-ribosyl)glycinamide + ADP + phosphate + H(+). It functions in the pathway purine metabolism; IMP biosynthesis via de novo pathway; N(2)-formyl-N(1)-(5-phospho-D-ribosyl)glycinamide from N(1)-(5-phospho-D-ribosyl)glycinamide (formate route): step 1/1. Its function is as follows. Involved in the de novo purine biosynthesis. Catalyzes the transfer of formate to 5-phospho-ribosyl-glycinamide (GAR), producing 5-phospho-ribosyl-N-formylglycinamide (FGAR). Formate is provided by PurU via hydrolysis of 10-formyl-tetrahydrofolate. The chain is Formate-dependent phosphoribosylglycinamide formyltransferase from Pseudomonas savastanoi pv. phaseolicola (strain 1448A / Race 6) (Pseudomonas syringae pv. phaseolicola (strain 1448A / Race 6)).